We begin with the raw amino-acid sequence, 57 residues long: Large ribosomal subunit protein bL32c (57 aa).

A disordered region spans residues 1-21; sequence MAVPKKRTSKSKKNLRKNTWK.

Belongs to the bacterial ribosomal protein bL32 family.

It localises to the plastid. The protein localises to the chloroplast. In Stigeoclonium helveticum (Green alga), this protein is Large ribosomal subunit protein bL32c.